The primary structure comprises 220 residues: UPF0319 protein YccT (220 aa).

The signal sequence occupies residues 1-20 (MKTGALATFLALCLPVTVFA).

Belongs to the UPF0319 family.

The sequence is that of UPF0319 protein YccT from Salmonella paratyphi A (strain ATCC 9150 / SARB42).